The chain runs to 940 residues: Isoleucine--tRNA ligase (940 aa).

The 'HIGH' region motif lies at 58–68 (PYANGSIHIGH). L-isoleucyl-5'-AMP is bound at residue Glu-564. The short motif at 605-609 (KMSKS) is the 'KMSKS' region element. ATP is bound at residue Lys-608. Zn(2+) is bound by residues Cys-903, Cys-906, Cys-923, and Cys-926.

Belongs to the class-I aminoacyl-tRNA synthetase family. IleS type 1 subfamily. Monomer. It depends on Zn(2+) as a cofactor.

The protein resides in the cytoplasm. The enzyme catalyses tRNA(Ile) + L-isoleucine + ATP = L-isoleucyl-tRNA(Ile) + AMP + diphosphate. In terms of biological role, catalyzes the attachment of isoleucine to tRNA(Ile). As IleRS can inadvertently accommodate and process structurally similar amino acids such as valine, to avoid such errors it has two additional distinct tRNA(Ile)-dependent editing activities. One activity is designated as 'pretransfer' editing and involves the hydrolysis of activated Val-AMP. The other activity is designated 'posttransfer' editing and involves deacylation of mischarged Val-tRNA(Ile). The sequence is that of Isoleucine--tRNA ligase from Shewanella sp. (strain MR-4).